The primary structure comprises 306 residues: Shugoshin (306 aa).

Positions 28 to 75 (NFKSTNESLIKKNLQLKQQLSQCTKALEKLRNENIALREQNQELIDAT) form a coiled coil. Disordered regions lie at residues 122 to 196 (PEPS…GRRS) and 223 to 306 (IAPS…DTFF). A compositionally biased stretch (basic and acidic residues) spans 133 to 161 (PKMECNLEKLDESPVRNFPRSDYEEENKS). Over residues 167–181 (NGPSSSSSMTQNLEN) the composition is skewed to polar residues. The span at 230–241 (GGPPKKAPPRKA) shows a compositional bias: pro residues.

It belongs to the shugoshin family.

It localises to the nucleus. It is found in the chromosome. The protein localises to the centromere. In terms of biological role, plays a central role in chromosome cohesion during cell division by preventing premature dissociation of cohesin complex from centromeres after prophase, when most of cohesin complex dissociates from chromosomes arms. The polypeptide is Shugoshin (sgo-1) (Caenorhabditis briggsae).